Here is a 159-residue protein sequence, read N- to C-terminus: Phosphopantetheine adenylyltransferase (159 aa).

T10 provides a ligand contact to substrate. ATP contacts are provided by residues 10 to 11 and H18; that span reads TF. K42, M74, and R88 together coordinate substrate. ATP is bound by residues 89 to 91, E99, and 124 to 130; these read GLR and WSFISSS.

The protein belongs to the bacterial CoaD family. As to quaternary structure, homohexamer. The cofactor is Mg(2+).

It localises to the cytoplasm. It carries out the reaction (R)-4'-phosphopantetheine + ATP + H(+) = 3'-dephospho-CoA + diphosphate. It functions in the pathway cofactor biosynthesis; coenzyme A biosynthesis; CoA from (R)-pantothenate: step 4/5. In terms of biological role, reversibly transfers an adenylyl group from ATP to 4'-phosphopantetheine, yielding dephospho-CoA (dPCoA) and pyrophosphate. The sequence is that of Phosphopantetheine adenylyltransferase from Enterobacter sp. (strain 638).